The sequence spans 380 residues: Chaperone protein DnaJ (380 aa).

One can recognise a J domain in the interval 5–72 (DFYEVLGVAK…NKRAAYDQYG (68 aa)). Residues 140-218 (GKDAQIRIPS…CGGQGKVKRQ (79 aa)) form a CR-type zinc finger. The Zn(2+) site is built by Cys153, Cys156, Cys170, Cys173, Cys192, Cys195, Cys206, and Cys209. CXXCXGXG motif repeat units lie at residues 153–160 (CDTCHGSG), 170–177 (CTTCNGMG), 192–199 (CPHCRGTG), and 206–213 (CTSCGGQG). The segment at 359–380 (KGGAKHSPSGESWTDRLKSFFS) is disordered. The span at 371–380 (WTDRLKSFFS) shows a compositional bias: basic and acidic residues.

Belongs to the DnaJ family. As to quaternary structure, homodimer. Zn(2+) is required as a cofactor.

Its subcellular location is the cytoplasm. In terms of biological role, participates actively in the response to hyperosmotic and heat shock by preventing the aggregation of stress-denatured proteins and by disaggregating proteins, also in an autonomous, DnaK-independent fashion. Unfolded proteins bind initially to DnaJ; upon interaction with the DnaJ-bound protein, DnaK hydrolyzes its bound ATP, resulting in the formation of a stable complex. GrpE releases ADP from DnaK; ATP binding to DnaK triggers the release of the substrate protein, thus completing the reaction cycle. Several rounds of ATP-dependent interactions between DnaJ, DnaK and GrpE are required for fully efficient folding. Also involved, together with DnaK and GrpE, in the DNA replication of plasmids through activation of initiation proteins. The chain is Chaperone protein DnaJ from Delftia acidovorans (strain DSM 14801 / SPH-1).